The primary structure comprises 231 residues: 2-C-methyl-D-erythritol 4-phosphate cytidylyltransferase (231 aa).

It belongs to the IspD/TarI cytidylyltransferase family. IspD subfamily.

The catalysed reaction is 2-C-methyl-D-erythritol 4-phosphate + CTP + H(+) = 4-CDP-2-C-methyl-D-erythritol + diphosphate. It functions in the pathway isoprenoid biosynthesis; isopentenyl diphosphate biosynthesis via DXP pathway; isopentenyl diphosphate from 1-deoxy-D-xylulose 5-phosphate: step 2/6. Its function is as follows. Catalyzes the formation of 4-diphosphocytidyl-2-C-methyl-D-erythritol from CTP and 2-C-methyl-D-erythritol 4-phosphate (MEP). This chain is 2-C-methyl-D-erythritol 4-phosphate cytidylyltransferase, found in Pseudoalteromonas atlantica (strain T6c / ATCC BAA-1087).